Reading from the N-terminus, the 467-residue chain is Argininosuccinate lyase (467 aa).

Belongs to the lyase 1 family. Argininosuccinate lyase subfamily.

The protein resides in the cytoplasm. The catalysed reaction is 2-(N(omega)-L-arginino)succinate = fumarate + L-arginine. It functions in the pathway amino-acid biosynthesis; L-arginine biosynthesis; L-arginine from L-ornithine and carbamoyl phosphate: step 3/3. The chain is Argininosuccinate lyase from Campylobacter curvus (strain 525.92).